The primary structure comprises 912 residues: Protein translocase subunit SecA (912 aa).

ATP is bound by residues Q87, 105–109 (GEGKT), and D510. The interval 854 to 912 (KLRHEQASAAQAEGEGDDGQQGQQATPETFVRQERKVGRNEPCPCGSGKKYKQCCGKVS) is disordered. Zn(2+)-binding residues include C896, C898, C907, and C908.

Belongs to the SecA family. Monomer and homodimer. Part of the essential Sec protein translocation apparatus which comprises SecA, SecYEG and auxiliary proteins SecDF-YajC and YidC. Zn(2+) is required as a cofactor.

Its subcellular location is the cell inner membrane. It is found in the cytoplasm. It carries out the reaction ATP + H2O + cellular proteinSide 1 = ADP + phosphate + cellular proteinSide 2.. Functionally, part of the Sec protein translocase complex. Interacts with the SecYEG preprotein conducting channel. Has a central role in coupling the hydrolysis of ATP to the transfer of proteins into and across the cell membrane, serving both as a receptor for the preprotein-SecB complex and as an ATP-driven molecular motor driving the stepwise translocation of polypeptide chains across the membrane. The sequence is that of Protein translocase subunit SecA from Marinobacter nauticus (strain ATCC 700491 / DSM 11845 / VT8) (Marinobacter aquaeolei).